Reading from the N-terminus, the 348-residue chain is S-adenosylmethionine:tRNA ribosyltransferase-isomerase (348 aa).

It belongs to the QueA family. In terms of assembly, monomer.

Its subcellular location is the cytoplasm. It carries out the reaction 7-aminomethyl-7-carbaguanosine(34) in tRNA + S-adenosyl-L-methionine = epoxyqueuosine(34) in tRNA + adenine + L-methionine + 2 H(+). Its pathway is tRNA modification; tRNA-queuosine biosynthesis. In terms of biological role, transfers and isomerizes the ribose moiety from AdoMet to the 7-aminomethyl group of 7-deazaguanine (preQ1-tRNA) to give epoxyqueuosine (oQ-tRNA). The sequence is that of S-adenosylmethionine:tRNA ribosyltransferase-isomerase from Polynucleobacter necessarius subsp. necessarius (strain STIR1).